The primary structure comprises 1393 residues: Rab3 GTPase-activating protein non-catalytic subunit (1393 aa).

Residues R36 to C67 are disordered. A Phosphoserine modification is found at S39. Residues W44 to G64 show a composition bias toward acidic residues. S450 is modified (phosphoserine). Phosphothreonine is present on T901. A phosphoserine mark is found at S916 and S978.

Belongs to the Rab3-GAP regulatory subunit family. As to quaternary structure, the Rab3 GTPase-activating complex is a heterodimer composed of RAB3GAP1 and RAB3GAP2. The Rab3 GTPase-activating complex interacts with DMXL2. Interacts with LMAN1. Ubiquitous.

The protein resides in the cytoplasm. Its subcellular location is the endoplasmic reticulum. Functionally, regulatory subunit of the Rab3 GTPase-activating (Rab3GAP) complex composed of RAB3GAP1 and RAB3GAP2, which has GTPase-activating protein (GAP) activity towards various Rab3 subfamily members (RAB3A, RAB3B, RAB3C and RAB3D), RAB5A and RAB43, and guanine nucleotide exchange factor (GEF) activity towards RAB18. As part of the Rab3GAP complex, acts as a GAP for Rab3 proteins by converting active RAB3-GTP to the inactive form RAB3-GDP. Rab3 proteins are involved in regulated exocytosis of neurotransmitters and hormones. The Rab3GAP complex acts as a GEF for RAB18 by promoting the conversion of inactive RAB18-GDP to the active form RAB18-GTP. Recruits and stabilizes RAB18 at the cis-Golgi membrane in human fibroblasts where RAB18 is most likely activated. Also involved in RAB18 recruitment at the endoplasmic reticulum (ER) membrane where it maintains proper ER structure. Required for normal eye and brain development. May participate in neurodevelopmental processes such as proliferation, migration and differentiation before synapse formation, and non-synaptic vesicular release of neurotransmitters. This Homo sapiens (Human) protein is Rab3 GTPase-activating protein non-catalytic subunit.